Reading from the N-terminus, the 447-residue chain is uncharacterized protein (447 aa).

12 helical membrane passes run 17-37 (IMMMALGGAIGAGLFKGSSSA), 40-60 (VAGPSVIIAYLLGGIILLFIM), 95-115 (IYWKMWVLNIAAEAVVAAIFI), 118-138 (WLPGCPIWVLALGISLIVTIV), 154-174 (AMIKITVIIIFIILGLLLLFV), 200-220 (GLITAMLVVIYSYGGTEIIGV), 243-263 (IVAFYLLPFFIIVSLIPWNQV), 289-311 (AVILLAIISSMNSGLYGSSRILY), 333-353 (MFAILMCTSSLYIGVLISLFA), 361-381 (LMGSLGYTVLFIWLIIGFAHL), 393-415 (YYVKWFPYTTWFAIVALLAILIG), and 419-441 (TTSIVITGITAAIYLLITVAYLV).

This sequence belongs to the amino acid-polyamine-organocation (APC) superfamily.

It localises to the cell membrane. May participate in leucine metabolism. May transport leucine or a compound related to leucine metabolism. This is an uncharacterized protein from Bacillus subtilis (strain 168).